Here is a 342-residue protein sequence, read N- to C-terminus: Lumican (342 aa).

The N-terminal stretch at 1–18 (MNLGVFPLLLALIGGASS) is a signal peptide. A sulfotyrosine mark is found at Y20, Y23, and Y34. An LRRNT domain is found at 32 to 70 (ALYGRSSPNCAPECNCPESYPSAMYCDELKLKSVPMVPP). LRR repeat units lie at residues 71-92 (GIKYLYLRNNQIDHIDDKAFEN), 95-118 (DLQWLILDHNLLENSKIKGKVFSK), 121-141 (QLKKLHINYNNLTESVGPLPK), 142-163 (SLVDLQLTNNKISKLGSFDGLV), 164-185 (NLTFIHLQHNQLKEDAVSAALK), 189-209 (SLEYLDLSFNQMTKLPSGLPV), 210-231 (SLLTLYLDNNKISNIPDEYFKR), and 234-254 (ALQYLRLSHNELADSGVPGNS). N92 carries N-linked (GlcNAc...) (keratan sulfate) asparagine glycosylation. N131 is a glycosylation site (N-linked (GlcNAc...) (keratan sulfate) asparagine). N164 carries an N-linked (GlcNAc...) (keratan sulfate) asparagine glycan. A glycan (N-linked (GlcNAc...) (keratan sulfate) asparagine) is linked at N256. LRR repeat units lie at residues 259-280 (SLLELDLSYNKLKSIPTVNENL) and 281-300 (ENYYLEVNELEKFDVKSFCK). The cysteines at positions 299 and 332 are disulfide-linked. S308 carries the phosphoserine modification. The LRR 11 repeat unit spans residues 309-330 (KIKHLRLDGNHITQTSLPPDMY).

The protein belongs to the small leucine-rich proteoglycan (SLRP) family. SLRP class II subfamily. As to quaternary structure, binds to laminin. Post-translationally, sulfated on tyrosine residue(s). Contains keratan sulfate. Cornea and other tissues.

Its subcellular location is the secreted. It localises to the extracellular space. It is found in the extracellular matrix. The sequence is that of Lumican (LUM) from Bos taurus (Bovine).